The following is a 196-amino-acid chain: Protein TEX261 (196 aa).

Helical transmembrane passes span 3 to 23 (FMYL…TLAV), 42 to 62 (SRII…LYVF), 70 to 90 (IGVG…FPFI), 97 to 117 (FILS…FFAE), and 125 to 145 (VLAY…VSLS).

This sequence belongs to the SVP26 family.

It localises to the membrane. In Homo sapiens (Human), this protein is Protein TEX261 (TEX261).